The following is a 691-amino-acid chain: Solute carrier organic anion transporter family member 1B1 (691 aa).

Residues 1-28 (MDQNQHLNKTAEAQPSENKKTRYCNGLK) are Cytoplasmic-facing. The chain crosses the membrane as a helical span at residues 29–48 (MFLAALSLSFIAKTLGAIIM). Over 49 to 67 (KSSIIHIERRFEISSSLVG) the chain is Extracellular. Residues 68 to 88 (FIDGSFEIGNLLVIVFVSYFG) form a helical membrane-spanning segment. The Cytoplasmic portion of the chain corresponds to 89–94 (SKLHRP). The chain crosses the membrane as a helical span at residues 95–119 (KLIGIGCFIMGIGGVLTALPHFFMG). Residues 120 to 168 (YYRYSKETNINSSENSTSTLSTCLINQILSLNRASPEIVGKGCLKESGS) are Extracellular-facing. Residues Asn-130 and Asn-134 are each glycosylated (N-linked (GlcNAc...) asparagine). The helical transmembrane segment at 169-197 (YMWIYVFMGNMLRGIGETPIVPLGLSYID) threads the bilayer. Over 198 to 216 (DFAKEGHSSLYLGILNAIA) the chain is Cytoplasmic. The chain crosses the membrane as a helical span at residues 217-237 (MIGPIIGFTLGSLFSKMYVDI). At 238 to 255 (GYVDLSTIRITPTDSRWV) the chain is on the extracellular side. The helical transmembrane segment at 256–280 (GAWWLNFLVSGLFSIISSIPFFFLP) threads the bilayer. The Cytoplasmic segment spans residues 281 to 331 (QTPNKPQKERKASLSLHVLETNDEKDQTANLTNQGKNITKNVTGFFQSFKS). Ser-293 and Ser-295 each carry phosphoserine. The helical transmembrane segment at 332 to 353 (ILTNPLYVMFVLLTLLQVSSYI) threads the bilayer. Over 354–373 (GAFTYVFKYVEQQYGQPSSK) the chain is Extracellular. A helical membrane pass occupies residues 374 to 397 (ANILLGVITIPIFASGMFLGGYII). The Cytoplasmic segment spans residues 398–401 (KKFK). Residues 402-425 (LNTVGIAKFSCFTAVMSLSFYLLY) traverse the membrane as a helical segment. Residues 426–537 (FFILCENKSV…DACTRKFYFF (112 aa)) are Extracellular-facing. The N-linked (GlcNAc...) asparagine glycan is linked to Asn-432. The region spanning 453 to 508 (DVPLSYCNSDCNCDESQWEPVCGNNGITYISPCLAGCKSSSGNKKPIVFYNCSCLE) is the Kazal-like domain. 3 cysteine pairs are disulfide-bonded: Cys-459–Cys-489, Cys-465–Cys-485, and Cys-474–Cys-506. Asn-503 and Asn-516 each carry an N-linked (GlcNAc...) asparagine glycan. A helical membrane pass occupies residues 538-560 (VAIQVLNLFFSALGGTSHVMLIV). Residues 561–569 (KIVQPELKS) lie on the Cytoplasmic side of the membrane. Residues 570–595 (LALGFHSMVIRALGGILAPIYFGALI) traverse the membrane as a helical segment. Residues 596–629 (DTTCIKWSTNNCGTRGSCRTYNSTSFSRVYLGLS) are Extracellular-facing. The N-linked (GlcNAc...) asparagine glycan is linked to Asn-617. A helical transmembrane segment spans residues 630–647 (SMLRVSSLVLYIILIYAM). Residues 648-691 (KKKYQEKDINASENGSVMDEANLESLNKNKHFVPSAGADSETHC) are Cytoplasmic-facing. A phosphoserine mark is found at Ser-672 and Ser-682.

The protein belongs to the organo anion transporter (TC 2.A.60) family. Highly expressed in liver, at the basolateral membranes of centrilobular hepatocytes. Expressed in liver (at protein level). Expressed in fetal liver. Not detected in heart, brain, placenta, lung, skeletal muscle, kidney, pancreas, spleen, thymus, prostate, testis, ovary, small intestine, colon and leukocyte. In testis, primarily localized to the basal membrane of Sertoli cells and weakly expressed in Leydig cells and within the tubules.

It localises to the basolateral cell membrane. The protein resides in the basal cell membrane. The enzyme catalyses taurocholate(out) = taurocholate(in). The catalysed reaction is dehydroepiandrosterone 3-sulfate(out) = dehydroepiandrosterone 3-sulfate(in). It carries out the reaction estrone 3-sulfate(out) = estrone 3-sulfate(in). It catalyses the reaction 3,3',5'-triiodo-L-thyronine(out) = 3,3',5'-triiodo-L-thyronine(in). The enzyme catalyses L-thyroxine(out) = L-thyroxine(in). The catalysed reaction is prostaglandin E2(out) = prostaglandin E2(in). It carries out the reaction thromboxane B2(out) = thromboxane B2(in). It catalyses the reaction 17beta-estradiol 17-O-(beta-D-glucuronate)(out) = 17beta-estradiol 17-O-(beta-D-glucuronate)(in). The enzyme catalyses leukotriene C4(out) = leukotriene C4(in). The catalysed reaction is leukotriene E4(out) = leukotriene E4(in). It carries out the reaction (4E,15E)-bilirubin IXalpha C8-beta-D-glucuronoside(out) = (4E,15E)-bilirubin IXalpha C8-beta-D-glucuronoside(in). It catalyses the reaction bilirubin IXalpha bis-beta-D-glucuronoside(out) = bilirubin IXalpha bis-beta-D-glucuronoside(in). Its function is as follows. Mediates the Na(+)-independent uptake of organic anions. Shows broad substrate specificity, can transport both organic anions such as bile acid taurocholate (cholyltaurine) and conjugated steroids (dehydroepiandrosterone 3-sulfate, 17-beta-glucuronosyl estradiol, and estrone 3-sulfate), as well as eicosanoids (prostaglandin E2, thromboxane B2, leukotriene C4, and leukotriene E4), and thyroid hormones (T4/L-thyroxine, and T3/3,3',5'-triiodo-L-thyronine). Can take up bilirubin glucuronides from plasma into the liver, contributing to the detoxification-enhancing liver-blood shuttling loop. Involved in the clearance of endogenous and exogenous substrates from the liver. Transports coproporphyrin I and III, by-products of heme synthesis, and may be involved in their hepatic disposition. May contribute to regulate the transport of organic compounds in testes across the blood-testis-barrier. Can transport HMG-CoA reductase inhibitors (also known as statins), such as pravastatin and pitavastatin, a clinically important class of hypolipidemic drugs. May play an important role in plasma and tissue distribution of the structurally diverse chemotherapeutic drug methotrexate. May also transport antihypertension agents, such as the angiotensin-converting enzyme (ACE) inhibitor prodrug enalapril, and the highly selective angiotensin II AT1-receptor antagonist valsartan, in the liver. Shows a pH-sensitive substrate specificity towards prostaglandin E2 and T4 which may be ascribed to the protonation state of the binding site and leads to a stimulation of substrate transport in an acidic microenvironment. Hydrogencarbonate/HCO3(-) acts as the probable counteranion that exchanges for organic anions. This chain is Solute carrier organic anion transporter family member 1B1 (SLCO1B1), found in Homo sapiens (Human).